A 718-amino-acid polypeptide reads, in one-letter code: K(+)-insensitive pyrophosphate-energized proton pump (718 aa).

6 helical membrane passes run Ala6 to Ile26, Ile61 to Ala81, Gly83 to Val103, Ala112 to Gly132, Leu133 to Trp153, and Val168 to Phe188. Lys190 contributes to the substrate binding site. Asp193, Asp197, Asn220, and Asp223 together coordinate Mg(2+). 6 helical membrane-spanning segments follow: residues Leu235–His255, Leu265–Val285, Gly300–Val320, Gly335–Ile355, Gly385–Ile405, and Leu413–Leu433. Mg(2+) is bound at residue Asp441. 4 helical membrane passes run Ala472–Ala492, Tyr524–Met544, Ile593–Ile613, and Ala620–Ile640. Asp650, Asp682, and Asp686 together coordinate Ca(2+). Lys689 is a substrate binding site. Residues Ala695–Ala715 traverse the membrane as a helical segment.

This sequence belongs to the H(+)-translocating pyrophosphatase (TC 3.A.10) family. K(+)-insensitive subfamily. Homodimer. The cofactor is Mg(2+).

It localises to the cell inner membrane. The enzyme catalyses diphosphate + H2O + H(+)(in) = 2 phosphate + 2 H(+)(out). Proton pump that utilizes the energy of pyrophosphate hydrolysis as the driving force for proton movement across the membrane. Generates a proton motive force. The chain is K(+)-insensitive pyrophosphate-energized proton pump from Brucella melitensis biotype 1 (strain ATCC 23456 / CCUG 17765 / NCTC 10094 / 16M).